The chain runs to 133 residues: NADPH-dependent 7-cyano-7-deazaguanine reductase (133 aa).

Cys49 serves as the catalytic Thioimide intermediate. Asp56 functions as the Proton donor in the catalytic mechanism. Substrate contacts are provided by residues Ile71 to Leu73 and His90 to Glu91.

This sequence belongs to the GTP cyclohydrolase I family. QueF type 1 subfamily.

Its subcellular location is the cytoplasm. The enzyme catalyses 7-aminomethyl-7-carbaguanine + 2 NADP(+) = 7-cyano-7-deazaguanine + 2 NADPH + 3 H(+). It participates in tRNA modification; tRNA-queuosine biosynthesis. Its function is as follows. Catalyzes the NADPH-dependent reduction of 7-cyano-7-deazaguanine (preQ0) to 7-aminomethyl-7-deazaguanine (preQ1). This Leptospira borgpetersenii serovar Hardjo-bovis (strain JB197) protein is NADPH-dependent 7-cyano-7-deazaguanine reductase.